A 460-amino-acid polypeptide reads, in one-letter code: Bifunctional protein GlmU (460 aa).

Residues 1 to 229 (MTNYAIILAA…FNESLGVNDR (229 aa)) are pyrophosphorylase. Residues 8-11 (LAAG), K22, Q72, and 77-78 (GT) each bind UDP-N-acetyl-alpha-D-glucosamine. Residue D102 coordinates Mg(2+). G139, E154, N169, and N227 together coordinate UDP-N-acetyl-alpha-D-glucosamine. N227 serves as a coordination point for Mg(2+). The linker stretch occupies residues 230-250 (VALATAETVMRQRITQKHMVN). The tract at residues 251-460 (GVTFHNPETV…RLAHHPSRSK (210 aa)) is N-acetyltransferase. Positions 332 and 350 each coordinate UDP-N-acetyl-alpha-D-glucosamine. The Proton acceptor role is filled by H362. UDP-N-acetyl-alpha-D-glucosamine-binding residues include Y365 and N376. Residues A379, 385 to 386 (NY), S404, A422, and R439 each bind acetyl-CoA.

It in the N-terminal section; belongs to the N-acetylglucosamine-1-phosphate uridyltransferase family. In the C-terminal section; belongs to the transferase hexapeptide repeat family. Homotrimer. Mg(2+) is required as a cofactor.

The protein resides in the cytoplasm. It catalyses the reaction alpha-D-glucosamine 1-phosphate + acetyl-CoA = N-acetyl-alpha-D-glucosamine 1-phosphate + CoA + H(+). The catalysed reaction is N-acetyl-alpha-D-glucosamine 1-phosphate + UTP + H(+) = UDP-N-acetyl-alpha-D-glucosamine + diphosphate. Its pathway is nucleotide-sugar biosynthesis; UDP-N-acetyl-alpha-D-glucosamine biosynthesis; N-acetyl-alpha-D-glucosamine 1-phosphate from alpha-D-glucosamine 6-phosphate (route II): step 2/2. The protein operates within nucleotide-sugar biosynthesis; UDP-N-acetyl-alpha-D-glucosamine biosynthesis; UDP-N-acetyl-alpha-D-glucosamine from N-acetyl-alpha-D-glucosamine 1-phosphate: step 1/1. It functions in the pathway bacterial outer membrane biogenesis; LPS lipid A biosynthesis. Catalyzes the last two sequential reactions in the de novo biosynthetic pathway for UDP-N-acetylglucosamine (UDP-GlcNAc). The C-terminal domain catalyzes the transfer of acetyl group from acetyl coenzyme A to glucosamine-1-phosphate (GlcN-1-P) to produce N-acetylglucosamine-1-phosphate (GlcNAc-1-P), which is converted into UDP-GlcNAc by the transfer of uridine 5-monophosphate (from uridine 5-triphosphate), a reaction catalyzed by the N-terminal domain. In Streptococcus pyogenes serotype M3 (strain ATCC BAA-595 / MGAS315), this protein is Bifunctional protein GlmU.